Consider the following 369-residue polypeptide: Cobalt-precorrin-5B C(1)-methyltransferase (369 aa).

Belongs to the CbiD family.

It carries out the reaction Co-precorrin-5B + S-adenosyl-L-methionine = Co-precorrin-6A + S-adenosyl-L-homocysteine. The protein operates within cofactor biosynthesis; adenosylcobalamin biosynthesis; cob(II)yrinate a,c-diamide from sirohydrochlorin (anaerobic route): step 6/10. Its function is as follows. Catalyzes the methylation of C-1 in cobalt-precorrin-5B to form cobalt-precorrin-6A. This is Cobalt-precorrin-5B C(1)-methyltransferase from Geobacter metallireducens (strain ATCC 53774 / DSM 7210 / GS-15).